We begin with the raw amino-acid sequence, 839 residues long: Enhancer of polycomb-like protein 1 (839 aa).

Disordered stretches follow at residues 350 to 379 (QKKR…AGSA), 393 to 415 (GSGS…PSKI), 608 to 640 (LADR…ISSD), and 679 to 839 (QQQQ…KVDA). The span at 608 to 620 (LADRQKYDRETEP) shows a compositional bias: basic and acidic residues. The span at 621 to 640 (TRQMSSYDKDPSQLNGISSD) shows a compositional bias: polar residues. Positions 679-690 (QQQQQQMRNRQQ) are enriched in low complexity. Gly residues predominate over residues 697 to 713 (PGAGLGGGQGAGGGAGG). A compositionally biased stretch (polar residues) spans 714 to 730 (SRNNSPAPGTNGPQSKM). Residues 747 to 786 (QHQQYQQMQQQQQQQQQQQQQRKMGVAPMNAASAAAAMAA) are compositionally biased toward low complexity. The segment covering 828-839 (MKQKSELAKVDA) has biased composition (basic and acidic residues).

Belongs to the enhancer of polycomb family. In terms of assembly, component of the NuA4 histone acetyltransferase complex.

It localises to the nucleus. In terms of biological role, component of the NuA4 histone acetyltransferase complex which is involved in transcriptional activation of selected genes principally by acetylation of nucleosomal histone H4 and H2A. The NuA4 complex is also involved in DNA repair. Involved in gene silencing by neighboring heterochromatin, blockage of the silencing spreading along the chromosome, and required for cell cycle progression through G2/M. The protein is Enhancer of polycomb-like protein 1 (EPL1) of Yarrowia lipolytica (strain CLIB 122 / E 150) (Yeast).